The following is a 95-amino-acid chain: Fatty acid-binding protein, liver (95 aa).

2 positions are modified to N6-succinyllysine: Lys13 and Lys18. Residue Ser21 is modified to Phosphoserine. Lys28 bears the N6-succinyllysine mark. Thr33 bears the Phosphothreonine mark. Ser38 carries the phosphoserine modification. N6-succinyllysine occurs at positions 39, 47, and 59. At Ser69 the chain carries Phosphoserine. Residue Lys90 is modified to N6-succinyllysine.

It belongs to the calycin superfamily. Fatty-acid binding protein (FABP) family. Monomer.

The protein resides in the cytoplasm. This protein binds free fatty acids and their coenzyme A derivatives, bilirubin, and some other small molecules in the cytoplasm; it may be involved in intracellular lipid transport. In Chaetophractus villosus (South American armadillo), this protein is Fatty acid-binding protein, liver (FABP1).